A 365-amino-acid polypeptide reads, in one-letter code: 3-dehydroquinate synthase (365 aa).

NAD(+) is bound by residues Gly-106 to Asp-110, Thr-130 to Thr-131, Lys-142, Lys-151, and Phe-169 to Thr-172. Residues Glu-184, His-247, and His-264 each coordinate Zn(2+).

It belongs to the sugar phosphate cyclases superfamily. Dehydroquinate synthase family. It depends on NAD(+) as a cofactor. Co(2+) is required as a cofactor. Requires Zn(2+) as cofactor.

The protein resides in the cytoplasm. It carries out the reaction 7-phospho-2-dehydro-3-deoxy-D-arabino-heptonate = 3-dehydroquinate + phosphate. The protein operates within metabolic intermediate biosynthesis; chorismate biosynthesis; chorismate from D-erythrose 4-phosphate and phosphoenolpyruvate: step 2/7. Its function is as follows. Catalyzes the conversion of 3-deoxy-D-arabino-heptulosonate 7-phosphate (DAHP) to dehydroquinate (DHQ). This chain is 3-dehydroquinate synthase, found in Listeria monocytogenes serovar 1/2a (strain ATCC BAA-679 / EGD-e).